A 397-amino-acid chain; its full sequence is Chorismate synthase (397 aa).

The NADP(+) site is built by Arg-40 and Arg-46. Residues 129–131, 257–258, Gly-302, 317–321, and Arg-343 contribute to the FMN site; these read RSS, QA, and KPISS.

Belongs to the chorismate synthase family. As to quaternary structure, homotetramer. Requires FMNH2 as cofactor.

It carries out the reaction 5-O-(1-carboxyvinyl)-3-phosphoshikimate = chorismate + phosphate. Its pathway is metabolic intermediate biosynthesis; chorismate biosynthesis; chorismate from D-erythrose 4-phosphate and phosphoenolpyruvate: step 7/7. Its function is as follows. Catalyzes the anti-1,4-elimination of the C-3 phosphate and the C-6 proR hydrogen from 5-enolpyruvylshikimate-3-phosphate (EPSP) to yield chorismate, which is the branch point compound that serves as the starting substrate for the three terminal pathways of aromatic amino acid biosynthesis. This reaction introduces a second double bond into the aromatic ring system. The polypeptide is Chorismate synthase (Pelodictyon phaeoclathratiforme (strain DSM 5477 / BU-1)).